The primary structure comprises 179 residues: Putative DUP240 protein DFP1 (179 aa).

The next 2 membrane-spanning stretches (helical) occupy residues 4-24 (FLLF…SGVL) and 26-46 (PAMV…IWSF).

This sequence belongs to the DUP/COS family.

The protein resides in the membrane. The protein is Putative DUP240 protein DFP1 of Saccharomyces cerevisiae (strain ATCC 204508 / S288c) (Baker's yeast).